The sequence spans 275 residues: N-(5'-phosphoribosyl)anthranilate isomerase 2, chloroplastic (275 aa).

The N-terminal 32 residues, 1–32 (MSTGISTDLHVHFGALNFSKTYKSGLSNRTVS), are a transit peptide targeting the chloroplast.

It belongs to the TrpF family. As to expression, expressed in roots and shoots.

The protein resides in the plastid. It is found in the chloroplast. The enzyme catalyses N-(5-phospho-beta-D-ribosyl)anthranilate = 1-(2-carboxyphenylamino)-1-deoxy-D-ribulose 5-phosphate. It participates in amino-acid biosynthesis; L-tryptophan biosynthesis; L-tryptophan from chorismate: step 3/5. The polypeptide is N-(5'-phosphoribosyl)anthranilate isomerase 2, chloroplastic (PAI2) (Arabidopsis thaliana (Mouse-ear cress)).